A 167-amino-acid chain; its full sequence is MSLKAGDSFPEGVTFSYIPWAEDASEITSCGIPINYNASKEFANKKVVLFALPGAFTPVCSANHVPEYIQKLPELRAKGVDQVAVLAYNDAYVMSAWGKANGVTGDDILFLSDPEAKFSKSIGWADEEGRTYRYVLVIDNGKIIYAAKEAAKNSLELSRADHVLKQL.

Residues 3–167 (LKAGDSFPEG…SRADHVLKQL (165 aa)) enclose the Thioredoxin domain. Cysteine 60 acts as the Cysteine sulfenic acid (-SOH) intermediate in catalysis.

The protein belongs to the peroxiredoxin family. Prx5 subfamily. Homodimer; disulfide-linked, upon oxidation.

The enzyme catalyses a hydroperoxide + [thioredoxin]-dithiol = an alcohol + [thioredoxin]-disulfide + H2O. Functionally, thiol-specific peroxidase that catalyzes the reduction of hydrogen peroxide and organic hydroperoxides to water and alcohols, respectively. Plays a role in cell protection against oxidative stress by detoxifying peroxides and as sensor of hydrogen peroxide-mediated signaling events. The chain is Peroxiredoxin Pen c 3 from Penicillium citrinum.